Here is a 125-residue protein sequence, read N- to C-terminus: Calcitonin receptor-stimulating peptide 1 (125 aa).

The N-terminal stretch at 1-25 (MGFWKFPPFLVLSILVLYQAGMFHA) is a signal peptide. The propeptide occupies 26–77 (APFRSVFDGRFDPATLDEEESRLLLAAMVNDYEQMRARESEKAQKTEGSRIQ). Residues cysteine 81 and cysteine 86 are joined by a disulfide bond.

Belongs to the calcitonin family.

It localises to the secreted. In terms of biological role, stimulates cAMP production in porcine kidney cell line LLC-PK1 via the calcitonin receptor (CT) but not via the CT-like (CL) receptor. The protein is Calcitonin receptor-stimulating peptide 1 (CRSP1) of Bos taurus (Bovine).